Here is a 1774-residue protein sequence, read N- to C-terminus: 6-methylsalicylic acid synthase (1774 aa).

Over residues 1–14 the composition is skewed to polar residues; the sequence is MHSAATSTYPSGKT. Positions 1–21 are disordered; that stretch reads MHSAATSTYPSGKTSPAPVGT. One can recognise a Ketosynthase family 3 (KS3) domain in the interval 32-457; the sequence is SNDVAVVGMA…GTVSHAVIEE (426 aa). Residues 186–238 form an acyltransferase region; sequence RISYHLNLMGPSTAVDAACASSLVAIHHGVQAIRLGESKVAIVGGVNALCGPG. Residues C204, H339, and H379 each act as for beta-ketoacyl synthase activity in the active site. Residues 642-676 form an acetyl/malonyl transferases region; sequence NGITPQAVIGHSVGEIAASVVAGALSPAEGALIVT. The For malonyltransferase activity role is filled by S653. The N-terminal hotdog fold stretch occupies residues 926–1045; the sequence is HTLLGQRIPV…AYWDRKVAGS (120 aa). Residues 926–1202 form the PKS/mFAS DH domain; it reads HTLLGQRIPV…FSEIEGTPGV (277 aa). H958 (proton acceptor; for dehydratase activity) is an active-site residue. The interval 1059-1202 is C-terminal hotdog fold; that stretch reads VTKLADNFSI…FSEIEGTPGV (144 aa). D1123 acts as the Proton donor; for dehydratase activity in catalysis. Residues 1403–1450 are 2-oxoacyl reductase; it reads GPRLLPRPEGTYLITGGLGVLGLEVADFLVEKGARRLLLISRRALPPR. Residue 1419–1424 coordinates NADP(+); sequence GLGVLG. A Carrier domain is found at 1698–1772; sequence AYLDEKIRGC…HLAVWFAEKL (75 aa). S1732 is subject to O-(pantetheine 4'-phosphoryl)serine.

In terms of assembly, homomultimer.

The enzyme catalyses 3 malonyl-CoA + acetyl-CoA + NADPH + 3 H(+) = 6-methylsalicylate + 3 CO2 + NADP(+) + 4 CoA + H2O. Its pathway is mycotoxin biosynthesis; patulin biosynthesis. Functionally, this multifunctional enzyme is a polyketide synthase. It catalyzes a total of 11 steps by seven different component enzymes, in the biosynthesis of the antibiotic patulin. This Penicillium patulum (Penicillium griseofulvum) protein is 6-methylsalicylic acid synthase.